Reading from the N-terminus, the 296-residue chain is 4-hydroxybenzoate octaprenyltransferase (296 aa).

A run of 8 helical transmembrane segments spans residues I29–V49, L55–F75, A102–A122, Y146–A166, G169–Y189, L219–F239, L241–W261, and F275–L295.

The protein belongs to the UbiA prenyltransferase family. Mg(2+) serves as cofactor.

The protein resides in the cell inner membrane. The enzyme catalyses all-trans-octaprenyl diphosphate + 4-hydroxybenzoate = 4-hydroxy-3-(all-trans-octaprenyl)benzoate + diphosphate. It participates in cofactor biosynthesis; ubiquinone biosynthesis. Functionally, catalyzes the prenylation of para-hydroxybenzoate (PHB) with an all-trans polyprenyl group. Mediates the second step in the final reaction sequence of ubiquinone-8 (UQ-8) biosynthesis, which is the condensation of the polyisoprenoid side chain with PHB, generating the first membrane-bound Q intermediate 3-octaprenyl-4-hydroxybenzoate. The sequence is that of 4-hydroxybenzoate octaprenyltransferase from Pseudomonas aeruginosa (strain LESB58).